A 248-amino-acid chain; its full sequence is 14-3-3 protein homolog 2 (248 aa).

It belongs to the 14-3-3 family.

In Echinococcus granulosus (Hydatid tapeworm), this protein is 14-3-3 protein homolog 2.